The chain runs to 675 residues: Protein PALS1 (675 aa).

Residues 1–78 form a disordered region; that stretch reads MTTSHMNGHV…RREEEGKKQE (78 aa). A required for the correct localization of PALS1 and PATJ at cell-cell contacts and the normal formation of tight junctions and adherens junctions region spans residues 1–345; that stretch reads MTTSHMNGHV…QQIKPPPAKE (345 aa). Basic and acidic residues-rich tracts occupy residues 10–36 and 54–78; these read VTEESDNEVKNVDLASPEEHQKHREMA and AQLERIRQQQEDMRRRREEEGKKQE. Residues Ser-14 and Ser-25 each carry the phosphoserine modification. The interval 21–140 is interaction with PARD6B; that stretch reads VDLASPEEHQ…LKHIQHTLVD (120 aa). Phosphoserine is present on residues Ser-83 and Ser-84. L27 domains follow at residues 120 to 177 and 179 to 235; these read KILE…NKAS and PFPL…MQLE. Positions 181–243 are interaction with LIN7C; it reads PLISNAQDLA…LEPFTDERVY (63 aa). The 81-residue stretch at 256–336 folds into the PDZ domain; it reads IVRIEKARDI…TLTFVLIPSQ (81 aa). One can recognise an SH3 domain in the interval 345–417; the sequence is ETVIHVKAHF…PGKSFQQQRE (73 aa). One can recognise a Guanylate kinase-like domain in the interval 479 to 660; that stretch reads KRPIILIGPQ…AYQELLRLIN (182 aa). 486–493 serves as a coordination point for ATP; that stretch reads GPQNCGQN.

Belongs to the MAGUK family. Heterodimer with MPP1. Forms a heterotrimeric complex composed of PALS1, LIN7B and PATJ; the N-terminal L27 domain of PALS1 interacts with the L27 domain of PATJ and the C-terminal L27 domain of PALS1 interacts with the L27 domain of LIN7B. Component of a complex composed of PALS1, CRB1 and MPP4. Component of a complex whose core is composed of ARHGAP17, AMOT, PALS1, PATJ and PARD3/PAR3. Component of a complex composed of PALS1, CRB1 and EPB41L5. Within the complex, interacts (via HOOK domain) with EPB41L5 (via FERM domain), and interacts with CRB1 (via intracellular domain). Component of a complex composed of PALS1, MPP3 and CRB1; PALS1 acts as a bridging protein between MPP3 (via guanylate kinase-like domain) and CRB1. Component of a complex composed of CRB3, PALS1 and PATJ. As part of the Crumbs complex; interacts with WWP1, the interaction is enhanced by AMOTL2 and facilitates WWP1 localization to the plasma membrane. The Crumbs complex promotes monoubiquitination of AMOTL2 by WWP1, which activates the Hippo signaling pathway. Interacts (via PDZ domain) with PATJ (via N-terminus). Interacts with EZR. Interacts (via PDZ domain) with CRB1 (via C-terminal ERLI motif). While the PDZ domain is sufficient for interaction with CRB1, the adjacent SH3 and guanylate kinase-like domains are likely to contribute to a high affinity interaction. Interacts with WWTR1/TAZ (via WW domain). Interacts with MPP7. Interacts (via PDZ domain) with CRB3 (via C-terminus). Interacts with LIN7C. Interacts with MPDZ. Interacts with PARD6B. Interacts with SC6A1. Interacts with CDH5; the interaction promotes PALS1 localization to cell junctions and is required for CDH5-mediated vascular lumen formation and endothelial cell. Interacts with NPHP1 (via coiled coil and SH3 domains). Interacts with NPHP4. Interacts with CRB2.

It localises to the golgi apparatus. Its subcellular location is the cell membrane. It is found in the endomembrane system. The protein localises to the cell junction. The protein resides in the tight junction. It localises to the adherens junction. Its subcellular location is the cell projection. It is found in the axon. The protein localises to the perikaryon. The protein resides in the apical cell membrane. Plays a role in tight junction biogenesis and in the establishment of cell polarity in epithelial cells. Also involved in adherens junction biogenesis by ensuring correct localization of the exocyst complex protein EXOC4/SEC8 which allows trafficking of adherens junction structural component CDH1 to the cell surface. Plays a role through its interaction with CDH5 in vascular lumen formation and endothelial membrane polarity. Required during embryonic and postnatal retinal development. Required for the maintenance of cerebellar progenitor cells in an undifferentiated proliferative state, preventing premature differentiation, and is required for cerebellar histogenesis, fissure formation, cerebellar layer organization and cortical development. Plays a role in neuronal progenitor cell survival, potentially via promotion of mTOR signaling. Plays a role in the radial and longitudinal extension of the myelin sheath in Schwann cells. May modulate SC6A1/GAT1-mediated GABA uptake by stabilizing the transporter. May play a role in the T-cell receptor-mediated activation of NF-kappa-B. Required for localization of EZR to the apical membrane of parietal cells and may play a role in the dynamic remodeling of the apical cytoskeleton. Required for the normal polarized localization of the vesicular marker STX4. Required for the correct trafficking of the myelin proteins PMP22 and MAG. Involved in promoting phosphorylation and cytoplasmic retention of transcriptional coactivators YAP1 and WWTR1/TAZ which leads to suppression of TGFB1-dependent transcription of target genes such as CCN2/CTGF, SERPINE1/PAI1, SNAI1/SNAIL1 and SMAD7. The chain is Protein PALS1 from Canis lupus familiaris (Dog).